The primary structure comprises 169 residues: Protein-export protein SecB (169 aa).

This sequence belongs to the SecB family. As to quaternary structure, homotetramer, a dimer of dimers. One homotetramer interacts with 1 SecA dimer.

The protein localises to the cytoplasm. Its function is as follows. One of the proteins required for the normal export of preproteins out of the cell cytoplasm. It is a molecular chaperone that binds to a subset of precursor proteins, maintaining them in a translocation-competent state. It also specifically binds to its receptor SecA. This Haemophilus influenzae (strain 86-028NP) protein is Protein-export protein SecB.